Consider the following 546-residue polypeptide: Choline/ethanolamine transporter FLVCR2 (546 aa).

Residues 1-84 (MVNESLNQEE…TLAQPSGLTH (84 aa)) form a disordered region. At 1–93 (MVNESLNQEE…HPNELVKEDS (93 aa)) the chain is on the cytoplasmic side. Over residues 22–49 (QADTSYSTQPSVSIHPSVSGHPSVSIHP) the composition is skewed to polar residues. 7 tandem repeats follow at residues 31-36 (PSVSIH), 37-42 (PSVSGH), 43-48 (PSVSIH), 49-54 (PSVSGH), 55-60 (PSVSID), 61-66 (PSVSVH), and 67-72 (PSSSAH). Residues 31–84 (PSVSIHPSVSGHPSVSIHPSVSGHPSVSIDPSVSVHPSSSAHPSTLAQPSGLTH) are 9 X 6 AA tandem repeats of P-S-[VS]-S-[VIAG]-[HD]. Residues 54-74 (HPSVSIDPSVSVHPSSSAHPS) show a composition bias toward low complexity. An 8; approximate repeat occupies 73–78 (PSTLAQ). A 9; approximate repeat occupies 79–84 (PSGLTH). The chain crosses the membrane as a helical span at residues 94-118 (VIKVSKRRWAVVLVFSCYSLCNAFQ). Positions 115, 116, and 119 each coordinate choline. Over 119–136 (WIQYGSINNIFMNFYGVS) the chain is Extracellular. A helical transmembrane segment spans residues 137-164 (AFAIDWLSMCYMLTYIPLLLPVAWMLEK). The Cytoplasmic portion of the chain corresponds to 165 to 166 (FG). The chain crosses the membrane as a helical span at residues 167-186 (LRTIAITGSALNCLGAWVKL). Over 187-193 (GSLEPHL) the chain is Extracellular. A helical transmembrane segment spans residues 194–222 (FPVTMVGQVICSVAQVFILGMPSRIASVW). Residue L212 coordinates choline. At 223–227 (FGANE) the chain is on the cytoplasmic side. Residues 228–253 (VSTACSMAVFGNQLGIAIGFLVPPVL) traverse the membrane as a helical segment. The Extracellular portion of the chain corresponds to 254–258 (VPNIK). Residues 259–288 (DQEKLAYHISIMFYIIGGVATLLFILVIIV) traverse the membrane as a helical segment. Topologically, residues 289–324 (FKEKPKYPPSRAQSLSYALATTDASYLSSIVRLFKN) are cytoplasmic. Residues 325 to 355 (LNFVLLVITYGLNAGAFYALSTLLNRMVIMH) traverse the membrane as a helical segment. Residue Y342 coordinates choline. The Extracellular portion of the chain corresponds to 356-359 (FPGQ). A helical transmembrane segment spans residues 360-388 (EVNAGRIGLTIVIAGMFGAMISGIWLDKS). Over 389 to 390 (KT) the chain is Cytoplasmic. A helical membrane pass occupies residues 391–413 (YKETTLVVYIMTLVGMVVYTFTL). Over 414 to 416 (NLN) the chain is Extracellular. The helical transmembrane segment at 417–446 (HLWIVFITADSLGFFMTGYLPLGFEFAVEL) threads the bilayer. Topologically, residues 447–454 (TYPESEGV) are cytoplasmic. Residues 455 to 480 (SSGLLNVSAQVFGIIFTISQGQIIDN) form a helical membrane-spanning segment. Choline is bound at residue Q464. Topologically, residues 481 to 482 (YG) are extracellular. The helical transmembrane segment at 483-505 (SVPGNIFLCVFLALGSALTAFIK) threads the bilayer. The Cytoplasmic portion of the chain corresponds to 506–546 (SDLRRQRANKDAPETKVQEEEEEEEESNTSKVPTVLSEAHL). Residues 511–523 (QRANKDAPETKVQ) show a composition bias toward basic and acidic residues. The tract at residues 511 to 546 (QRANKDAPETKVQEEEEEEEESNTSKVPTVLSEAHL) is disordered. Position 535 is a phosphoserine (S535).

This sequence belongs to the major facilitator superfamily. Feline leukemia virus subgroup C receptor (TC 2.A.1.28.1) family. Interacts with components of electron transfer chain complexes III, IV and V including CYC1, NDUFA4, COX4I1, ATP5PD and ATP5F1C; these interactions occur in the absence of heme and are disrupted upon heme binding. Interacts with ATP2A2; this interaction occurs in the absence of heme and promotes ATP2A2 proteasomal degradation; the complex is dissociated upon heme binding. Interacts with HMOX1; this interaction is potentiated in the presence of heme.

The protein localises to the cell membrane. It localises to the mitochondrion membrane. The protein resides in the endoplasmic reticulum membrane. It carries out the reaction choline(out) = choline(in). It catalyses the reaction ethanolamine(in) = ethanolamine(out). The catalysed reaction is heme b(in) = heme b(out). Functionally, choline uniporter that specifically mediates choline uptake at the blood-brain-barrier. Responsible for the majority of choline uptake across the blood-brain-barrier from the circulation into the brain. Choline, a nutrient critical for brain development, is a precursor of phosphatidylcholine, as well as betaine. Also mediates transport of ethanolamine. Choline and ethanolamine transport is not coupled with proton transport and is exclusively driven by the choline gradient across the plasma membrane. However, the presence of an inwardly directed proton gradient enhances choline uptake. Also acts as a heme b transporter. Required to regulate mitochondrial respiration processes, ATP synthesis and thermogenesis. At low heme levels, interacts with components of electron transfer chain (ETC) complexes and ATP2A2, leading to ubiquitin-mediated degradation of ATP2A2 and inhibition of thermogenesis. Upon heme binding, dissociates from ETC complexes to allow switching from mitochondrial ATP synthesis to thermogenesis. This chain is Choline/ethanolamine transporter FLVCR2 (Flvcr2), found in Rattus norvegicus (Rat).